Here is a 709-residue protein sequence, read N- to C-terminus: Ribosomal RNA large subunit methyltransferase K/L (709 aa).

A THUMP domain is found at 43–154 (LAYRITLWTR…NGVITIAMNF (112 aa)).

It belongs to the methyltransferase superfamily. RlmKL family.

It localises to the cytoplasm. The enzyme catalyses guanosine(2445) in 23S rRNA + S-adenosyl-L-methionine = N(2)-methylguanosine(2445) in 23S rRNA + S-adenosyl-L-homocysteine + H(+). The catalysed reaction is guanosine(2069) in 23S rRNA + S-adenosyl-L-methionine = N(2)-methylguanosine(2069) in 23S rRNA + S-adenosyl-L-homocysteine + H(+). Its function is as follows. Specifically methylates the guanine in position 2445 (m2G2445) and the guanine in position 2069 (m7G2069) of 23S rRNA. This is Ribosomal RNA large subunit methyltransferase K/L from Shewanella baltica (strain OS155 / ATCC BAA-1091).